Consider the following 447-residue polypeptide: UPF0210 protein LEUM_1180 (447 aa).

It belongs to the UPF0210 family. In terms of assembly, homodimer.

The sequence is that of UPF0210 protein LEUM_1180 from Leuconostoc mesenteroides subsp. mesenteroides (strain ATCC 8293 / DSM 20343 / BCRC 11652 / CCM 1803 / JCM 6124 / NCDO 523 / NBRC 100496 / NCIMB 8023 / NCTC 12954 / NRRL B-1118 / 37Y).